We begin with the raw amino-acid sequence, 110 residues long: Minor capsid protein VP2 (110 aa).

Belongs to the vesivirus VP2 protein family. In terms of assembly, homooligomer. The portal-like structure consists in 12 copies of VP2. Interacts with capsid protein VP1.

Its subcellular location is the virion. The protein resides in the host cytoplasm. Minor structural protein that forms a portal-like structure at a unique three-fold axis of symmetry, following binding to the host receptor. The channel formed by VP2 may allow the delivery of the viral genome through the host endosomal membrane. The protein is Minor capsid protein VP2 of Otariidae (fur seals &amp; sea lions).